Here is a 257-residue protein sequence, read N- to C-terminus: NAD kinase (257 aa).

Residue aspartate 46 is the Proton acceptor of the active site. NAD(+) is bound by residues 46-47 (DG), 116-117 (NE), aspartate 146, alanine 154, 157-162 (TAYNLS), and asparagine 218.

The protein belongs to the NAD kinase family. A divalent metal cation serves as cofactor.

Its subcellular location is the cytoplasm. It carries out the reaction NAD(+) + ATP = ADP + NADP(+) + H(+). Involved in the regulation of the intracellular balance of NAD and NADP, and is a key enzyme in the biosynthesis of NADP. Catalyzes specifically the phosphorylation on 2'-hydroxyl of the adenosine moiety of NAD to yield NADP. The polypeptide is NAD kinase (Brucella suis biovar 1 (strain 1330)).